The primary structure comprises 930 residues: Isoleucine--tRNA ligase (930 aa).

The 'HIGH' region signature appears at 57-67; it reads PYANGNIHVGH. Glu554 is an L-isoleucyl-5'-AMP binding site. A 'KMSKS' region motif is present at residues 595–599; that stretch reads KMSKS. Residue Lys598 participates in ATP binding.

This sequence belongs to the class-I aminoacyl-tRNA synthetase family. IleS type 1 subfamily. Monomer.

The protein localises to the cytoplasm. It catalyses the reaction tRNA(Ile) + L-isoleucine + ATP = L-isoleucyl-tRNA(Ile) + AMP + diphosphate. Catalyzes the attachment of isoleucine to tRNA(Ile). As IleRS can inadvertently accommodate and process structurally similar amino acids such as valine, to avoid such errors it has two additional distinct tRNA(Ile)-dependent editing activities. One activity is designated as 'pretransfer' editing and involves the hydrolysis of activated Val-AMP. The other activity is designated 'posttransfer' editing and involves deacylation of mischarged Val-tRNA(Ile). This is Isoleucine--tRNA ligase from Streptococcus agalactiae serotype Ia (strain ATCC 27591 / A909 / CDC SS700).